A 335-amino-acid chain; its full sequence is Calcium/calmodulin-dependent protein kinase type I (335 aa).

Residues 31 to 291 form the Protein kinase domain; sequence YRVGRVLGGG…AADALKHPFL (261 aa). 37 to 45 provides a ligand contact to ATP; the sequence is LGGGTYATV. The active-site Proton acceptor is Asp-154. A Phosphothreonine; by autocatalysis modification is found at Thr-192. The segment at 310–334 is calmodulin-binding; it reads NARKTFRTAYNAVRAFNTWKKLENK.

The protein belongs to the protein kinase superfamily. CAMK Ser/Thr protein kinase family. CaMK subfamily.

The protein resides in the cytoplasm. The enzyme catalyses L-seryl-[protein] + ATP = O-phospho-L-seryl-[protein] + ADP + H(+). It catalyses the reaction L-threonyl-[protein] + ATP = O-phospho-L-threonyl-[protein] + ADP + H(+). Its function is as follows. Important in cell cycle regulation. The chain is Calcium/calmodulin-dependent protein kinase type I (cmk1) from Schizosaccharomyces pombe (strain 972 / ATCC 24843) (Fission yeast).